Reading from the N-terminus, the 408-residue chain is UDP-N-acetylglucosamine--dolichyl-phosphate N-acetylglucosaminephosphotransferase (408 aa).

Topologically, residues 1–10 (MWAFPELPLP) are lumenal. A helical transmembrane segment spans residues 11 to 38 (LLVNLFGSLLGFVATVTLIPAFRSHFIA). Over 39–58 (ARLCGQDLNKLSRQQIPESQ) the chain is Cytoplasmic. Residues 44–46 (QDL) and E56 contribute to the UDP-N-acetyl-alpha-D-glucosamine site. A helical membrane pass occupies residues 59 to 78 (GVICGAVFLIILFCFIPFPF). The Lumenal segment spans residues 79-91 (LNCFVEEQCKAFP). A helical transmembrane segment spans residues 92–118 (HHEFVALIGALLAICCMIFLGFADDVL). The Cytoplasmic portion of the chain corresponds to 119-121 (NLR). Residues 122 to 143 (WRHKLLLPTAASLPLLMVYFTN) traverse the membrane as a helical segment. Residue K125 participates in dolichyl phosphate binding. At 144 to 166 (FGNTTIVVPKPFRWILGLHLDLG) the chain is on the lumenal side. N-linked (GlcNAc...) asparagine glycosylation occurs at N146. A helical membrane pass occupies residues 167–186 (ILYYVYMGLLAVFCTNAINI). Dolichyl phosphate is bound at residue 178–186 (VFCTNAINI). N185 contacts Mg(2+). Over 187 to 192 (LAGING) the chain is Cytoplasmic. N191 is a UDP-N-acetyl-alpha-D-glucosamine binding site. A helical membrane pass occupies residues 193–213 (LEAGQSLVISASIIVFNLVEL). The Lumenal segment spans residues 214 to 218 (EGDYR). The helical transmembrane segment at 219 to 242 (DDHVFSLYFMIPFFFTTLGLLYHN) threads the bilayer. Residues 243–250 (WYPSQVFV) are Cytoplasmic-facing. Residues 251-269 (GDTFCYFAGMTFAVVGILG) traverse the membrane as a helical segment. D252 is a Mg(2+) binding site. The Lumenal portion of the chain corresponds to 270–271 (HF). The helical transmembrane segment at 272-293 (SKTMLLFFIPQVFNFLYSLPQL) threads the bilayer. Over 294 to 375 (LHAIPCPRHR…LLLKIFGPIH (82 aa)) the chain is Cytoplasmic. 301 to 303 (RHR) provides a ligand contact to UDP-N-acetyl-alpha-D-glucosamine. A helical membrane pass occupies residues 376 to 400 (ERNLTLLLLLLQILSSAVTFSIRYQ). Over 401-408 (LVRLFYDV) the chain is Lumenal.

The protein belongs to the glycosyltransferase 4 family. Homodimer. Mg(2+) is required as a cofactor.

The protein localises to the endoplasmic reticulum membrane. The enzyme catalyses a di-trans,poly-cis-dolichyl phosphate + UDP-N-acetyl-alpha-D-glucosamine = an N-acetyl-alpha-D-glucosaminyl-diphospho-di-trans,poly-cis-dolichol + UMP. It functions in the pathway protein modification; protein glycosylation. With respect to regulation, inhibited by natural nucleoside antibiotic tunicamycin, which acts as a structural analog and competitor of UDP-GlcNAc. Functionally, UDP-N-acetylglucosamine--dolichyl-phosphate N-acetylglucosaminephosphotransferase that operates in the biosynthetic pathway of dolichol-linked oligosaccharides, the glycan precursors employed in protein asparagine (N)-glycosylation. The assembly of dolichol-linked oligosaccharides begins on the cytosolic side of the endoplasmic reticulum membrane and finishes in its lumen. The sequential addition of sugars to dolichol pyrophosphate produces dolichol-linked oligosaccharides containing fourteen sugars, including two GlcNAcs, nine mannoses and three glucoses. Once assembled, the oligosaccharide is transferred from the lipid to nascent proteins by oligosaccharyltransferases. Catalyzes the initial step of dolichol-linked oligosaccharide biosynthesis, transfering GlcNAc-1-P from cytosolic UDP-GlcNAc onto the carrier lipid dolichyl phosphate (P-dolichol), yielding GlcNAc-P-P-dolichol embedded in the cytoplasmic leaflet of the endoplasmic reticulum membrane. In Cricetulus griseus (Chinese hamster), this protein is UDP-N-acetylglucosamine--dolichyl-phosphate N-acetylglucosaminephosphotransferase (DPAGT1).